The chain runs to 769 residues: Glutathione biosynthesis bifunctional protein GshAB (769 aa).

Residues 1–347 (MLDSFKEDPK…QLADENENNI (347 aa)) form a glutamate--cysteine ligase region. The ATP-grasp domain occupies 514 to 768 (KLVLAEHDIR…IGDKILDFLF (255 aa)). 541–599 (SLFEDKQIVVKPKSTNYGWGISIFKNKFTLEDYQEALNIAFSYDSSVIIEEFIPGDEFR) lines the ATP pocket. Positions 721, 738, and 740 each coordinate Mg(2+). Asp721, Glu738, and Asn740 together coordinate Mn(2+).

The protein in the N-terminal section; belongs to the glutamate--cysteine ligase type 1 family. Type 2 subfamily. As to quaternary structure, monomer. Mg(2+) serves as cofactor. It depends on Mn(2+) as a cofactor.

It carries out the reaction L-cysteine + L-glutamate + ATP = gamma-L-glutamyl-L-cysteine + ADP + phosphate + H(+). The catalysed reaction is gamma-L-glutamyl-L-cysteine + glycine + ATP = glutathione + ADP + phosphate + H(+). The protein operates within sulfur metabolism; glutathione biosynthesis; glutathione from L-cysteine and L-glutamate: step 1/2. It participates in sulfur metabolism; glutathione biosynthesis; glutathione from L-cysteine and L-glutamate: step 2/2. In terms of biological role, synthesizes glutathione from L-glutamate and L-cysteine via gamma-L-glutamyl-L-cysteine. The protein is Glutathione biosynthesis bifunctional protein GshAB of Listeria monocytogenes serotype 4b (strain F2365).